The sequence spans 1083 residues: Ubiquitin-protein ligase E3C (1083 aa).

Composition is skewed to basic and acidic residues over residues Met-1 to Thr-10 and Ser-20 to Glu-40. Positions Met-1–Glu-40 are disordered. The cis-determinant of acceptor ubiquitin-binding stretch occupies residues Met-1 to Arg-60. The region spanning Arg-45 to Asp-74 is the IQ domain. Positions Ala-354–Val-386 are disordered. A compositionally biased stretch (acidic residues) spans Ser-366–Asp-376. The 340-residue stretch at Asn-744–Ser-1083 folds into the HECT domain. Lys-903 participates in a covalent cross-link: Glycyl lysine isopeptide (Lys-Gly) (interchain with G-Cter in ubiquitin); by autocatalysis. The active-site Glycyl thioester intermediate is Cys-1051.

It belongs to the UBE3C family. In terms of assembly, interacts with 26S proteasomes. Interacts (via the HECT domain) with UBE2D1 and, less efficiently, with UBE2L3. Post-translationally, autoubiquitinated; promoting its own degradation.

The enzyme catalyses S-ubiquitinyl-[E2 ubiquitin-conjugating enzyme]-L-cysteine + [acceptor protein]-L-lysine = [E2 ubiquitin-conjugating enzyme]-L-cysteine + N(6)-ubiquitinyl-[acceptor protein]-L-lysine.. It participates in protein modification; protein ubiquitination. Its function is as follows. E3 ubiquitin-protein ligase that specifically catalyzes 'Lys-29'- and 'Lys-48'-linked polyubiquitin chains. Accepts ubiquitin from the E2 ubiquitin-conjugating enzyme UBE2D1 in the form of a thioester and then directly transfers the ubiquitin to targeted substrates. Associates with the proteasome and promotes elongation of ubiquitin chains on substrates bound to the 26S proteasome. Also catalyzes 'Lys-29'- and 'Lys-48'-linked ubiquitination of 26S proteasome subunit ADRM1/RPN13 in response to proteotoxic stress, impairing the ability of the proteasome to bind and degrade ubiquitin-conjugated proteins. Acts as a negative regulator of autophagy by mediating 'Lys-29'- and 'Lys-48'-linked ubiquitination of PIK3C3/VPS34, promoting its degradation. Can assemble unanchored poly-ubiquitin chains in either 'Lys-29'- or 'Lys-48'-linked polyubiquitin chains; with some preference for 'Lys-48' linkages. Acts as a negative regulator of type I interferon by mediating 'Lys-48'-linked ubiquitination of IRF3 and IRF7, leading to their degradation by the proteasome. Catalyzes ubiquitination and degradation of CAND2. The sequence is that of Ubiquitin-protein ligase E3C from Mus musculus (Mouse).